A 331-amino-acid polypeptide reads, in one-letter code: Heat-inducible transcription repressor HrcA (331 aa).

The protein belongs to the HrcA family.

Negative regulator of class I heat shock genes (grpE-dnaK-dnaJ and groELS operons). Prevents heat-shock induction of these operons. The protein is Heat-inducible transcription repressor HrcA of Synechococcus sp. (strain WH7803).